The sequence spans 231 residues: 7-cyano-7-deazaguanine synthase (231 aa).

Residue Phe-8 to Leu-18 participates in ATP binding. Residues Cys-188, Cys-197, Cys-200, and Cys-203 each coordinate Zn(2+).

This sequence belongs to the QueC family. Zn(2+) serves as cofactor.

It carries out the reaction 7-carboxy-7-deazaguanine + NH4(+) + ATP = 7-cyano-7-deazaguanine + ADP + phosphate + H2O + H(+). It participates in purine metabolism; 7-cyano-7-deazaguanine biosynthesis. Its function is as follows. Catalyzes the ATP-dependent conversion of 7-carboxy-7-deazaguanine (CDG) to 7-cyano-7-deazaguanine (preQ(0)). The protein is 7-cyano-7-deazaguanine synthase of Cronobacter sakazakii (strain ATCC BAA-894) (Enterobacter sakazakii).